Reading from the N-terminus, the 32-residue chain is Turripeptide XIV-18 (32 aa).

Isoleucine 30 is modified (isoleucine amide).

Contains 2 disulfide bonds. As to expression, expressed by the venom duct.

It localises to the secreted. The protein is Turripeptide XIV-18 of Gemmula speciosa (Splendid gem-turris).